The following is a 535-amino-acid chain: Dual specificity calcium/calmodulin-dependent 3',5'-cyclic nucleotide phosphodiesterase 1A (535 aa).

Calmodulin-binding stretches follow at residues 24 to 44 (TEKM…QLER) and 114 to 137 (EKPK…MYRK). In terms of domain architecture, PDEase spans 142–522 (VGLAYPAAVI…ERWKELAAQE (381 aa)). Catalysis depends on His-219, which acts as the Proton donor. Zn(2+) contacts are provided by His-223, His-259, Asp-260, and Asp-366. Asp-260 provides a ligand contact to Mg(2+).

The protein belongs to the cyclic nucleotide phosphodiesterase family. PDE1 subfamily. Homodimer. Interacts with YWHAZ. The cofactor is Zn(2+). It depends on Mg(2+) as a cofactor. As to expression, several tissues, including brain, kidney, testes and heart.

It carries out the reaction a nucleoside 3',5'-cyclic phosphate + H2O = a nucleoside 5'-phosphate + H(+). The enzyme catalyses 3',5'-cyclic GMP + H2O = GMP + H(+). The catalysed reaction is 3',5'-cyclic AMP + H2O = AMP + H(+). Its activity is regulated as follows. Type I PDE are activated by the binding of calmodulin in the presence of Ca(2+). Functionally, calcium/calmodulin-dependent cyclic nucleotide phosphodiesterase with a dual specificity for the second messengers cGMP and cAMP, which are key regulators of many important physiological processes. Has a higher efficiency with cGMP compared to cAMP. This is Dual specificity calcium/calmodulin-dependent 3',5'-cyclic nucleotide phosphodiesterase 1A from Homo sapiens (Human).